Here is a 593-residue protein sequence, read N- to C-terminus: NADH-quinone oxidoreductase subunit C/D (593 aa).

Residues 1 to 184 are NADH dehydrogenase I subunit C; sequence MTADNALYIP…DPYSLTLAKQ (184 aa). Residues 208–593 are NADH dehydrogenase I subunit D; sequence DYMFLNLGPN…IDFVMADVDR (386 aa).

It in the N-terminal section; belongs to the complex I 30 kDa subunit family. This sequence in the C-terminal section; belongs to the complex I 49 kDa subunit family. NDH-1 is composed of 13 different subunits. Subunits NuoB, CD, E, F, and G constitute the peripheral sector of the complex.

The protein localises to the cell inner membrane. The enzyme catalyses a quinone + NADH + 5 H(+)(in) = a quinol + NAD(+) + 4 H(+)(out). NDH-1 shuttles electrons from NADH, via FMN and iron-sulfur (Fe-S) centers, to quinones in the respiratory chain. The immediate electron acceptor for the enzyme in this species is believed to be ubiquinone. Couples the redox reaction to proton translocation (for every two electrons transferred, four hydrogen ions are translocated across the cytoplasmic membrane), and thus conserves the redox energy in a proton gradient. In Pseudomonas savastanoi pv. phaseolicola (strain 1448A / Race 6) (Pseudomonas syringae pv. phaseolicola (strain 1448A / Race 6)), this protein is NADH-quinone oxidoreductase subunit C/D.